Reading from the N-terminus, the 355-residue chain is 3-isopropylmalate dehydrogenase (355 aa).

Substrate contacts are provided by R98, R108, R132, and D223. Mg(2+)-binding residues include D223, D247, and D251. Residue 283-295 (GSAPDIAGQQKAD) participates in NAD(+) binding.

It belongs to the isocitrate and isopropylmalate dehydrogenases family. LeuB type 2 subfamily. In terms of assembly, homodimer. The cofactor is Mg(2+). Mn(2+) serves as cofactor.

Its subcellular location is the cytoplasm. The enzyme catalyses (2R,3S)-3-isopropylmalate + NAD(+) = 4-methyl-2-oxopentanoate + CO2 + NADH. It functions in the pathway amino-acid biosynthesis; L-leucine biosynthesis; L-leucine from 3-methyl-2-oxobutanoate: step 3/4. In terms of biological role, catalyzes the oxidation of 3-carboxy-2-hydroxy-4-methylpentanoate (3-isopropylmalate) to 3-carboxy-4-methyl-2-oxopentanoate. The product decarboxylates to 4-methyl-2 oxopentanoate. In Clavibacter michiganensis subsp. michiganensis (strain NCPPB 382), this protein is 3-isopropylmalate dehydrogenase.